Consider the following 105-residue polypeptide: UPF0145 protein (105 aa).

The protein belongs to the UPF0145 family.

In Enterococcus faecalis (Streptococcus faecalis), this protein is UPF0145 protein.